The chain runs to 226 residues: Small ribosomal subunit protein uS2c (226 aa).

This sequence belongs to the universal ribosomal protein uS2 family.

The protein resides in the plastid. Its subcellular location is the chloroplast. The protein is Small ribosomal subunit protein uS2c (rps2) of Ostreococcus tauri.